An 887-amino-acid polypeptide reads, in one-letter code: Probable alpha/beta-glucosidase agdC (887 aa).

The N-terminal stretch at methionine 1 to alanine 17 is a signal peptide. N-linked (GlcNAc...) asparagine glycans are attached at residues asparagine 171, asparagine 293, and asparagine 373. Residue aspartate 422 is the Nucleophile of the active site. Glutamate 425 is an active-site residue. Positions proline 457–valine 483 are disordered. Aspartate 571 serves as the catalytic Proton donor. Asparagine 747 and asparagine 879 each carry an N-linked (GlcNAc...) asparagine glycan.

This sequence belongs to the glycosyl hydrolase 31 family.

Its subcellular location is the secreted. It carries out the reaction Hydrolysis of terminal, non-reducing (1-&gt;4)-linked alpha-D-glucose residues with release of alpha-D-glucose.. The enzyme catalyses Hydrolysis of terminal, non-reducing beta-D-glucosyl residues with release of beta-D-glucose.. In terms of biological role, glucosidase involved in the degradation of cellulosic biomass. Has both alpha- and beta-glucosidase activity. This Aspergillus clavatus (strain ATCC 1007 / CBS 513.65 / DSM 816 / NCTC 3887 / NRRL 1 / QM 1276 / 107) protein is Probable alpha/beta-glucosidase agdC (agdC).